Here is an 872-residue protein sequence, read N- to C-terminus: Metabotropic glutamate receptor 2 (872 aa).

Positions M1–A18 are cleaved as a signal peptide. Residues E19–A568 are Extracellular-facing. C50 and C92 are oxidised to a cystine. Residues R57, R61, S145, A166, and T168 each contribute to the L-glutamate site. N203 and N286 each carry an N-linked (GlcNAc...) asparagine glycan. Cystine bridges form between C234–C518, C355–C362, C400–C407, C500–C519, C504–C522, C525–C537, and C540–C553. An L-glutamate-binding site is contributed by D295. N-linked (GlcNAc...) asparagine glycosylation is present at N338. K377 contacts L-glutamate. Residue N402 is glycosylated (N-linked (GlcNAc...) asparagine). N547 carries an N-linked (GlcNAc...) asparagine glycan. Residues V569–F589 traverse the membrane as a helical segment. The Cytoplasmic segment spans residues V590 to E604. The helical transmembrane segment at L605–A625 threads the bilayer. The Extracellular portion of the chain corresponds to K626–T633. C632 and C721 are oxidised to a cystine. Residues L634–L651 form a helical membrane-spanning segment. The Cytoplasmic segment spans residues T652 to Q679. The tract at residues A677 to A685 is important for interaction with HTR2A. A helical transmembrane segment spans residues V680–V700. At E701–A726 the chain is on the extracellular side. A helical membrane pass occupies residues S727 to F747. Residues K748–K760 lie on the Cytoplasmic side of the membrane. The helical transmembrane segment at F761–Y781 threads the bilayer. Topologically, residues V782–V798 are extracellular. Residues S799–F819 traverse the membrane as a helical segment. The Cytoplasmic portion of the chain corresponds to Q820–L872.

This sequence belongs to the G-protein coupled receptor 3 family. In terms of assembly, forms heterodimers with GRM3 or GRM4. Interacts with GNAI1. Interacts with TAMALIN. Interacts with HTR2A. As to expression, detected in neurons in brain cortex (at protein level).

The protein localises to the cell membrane. The protein resides in the synapse. It is found in the cell projection. It localises to the dendrite. Dimeric G protein-coupled receptor which is activated by the excitatory neurotransmitter L-glutamate. Plays critical roles in modulating synaptic transmission and neuronal excitability. Upon activation by glutamate, inhibits presynaptic calcium channels, reducing further glutamate release and dampening excitatory signaling. Mechanistically, ligand binding causes a conformation change that triggers signaling via guanine nucleotide-binding proteins (G proteins) and modulates the activity of down-stream effectors, such as adenylate cyclase. May mediate suppression of neurotransmission or may be involved in synaptogenesis or synaptic stabilization. This is Metabotropic glutamate receptor 2 (Grm2) from Mus musculus (Mouse).